A 205-amino-acid chain; its full sequence is MTNIVWHQHPVDQAARAEQKGQNPVLLWFTGLSGAGKSTLAGALERALFEAGFHTYLLDGDNVRHGLCKDLGFTVEDRDENLRRVGEVAKLMVDAGLVVLSAFISPTREERDSIRARFPASQFIEVHVSTPLSVCEQRDPKGLYVKARSGEISNFTGISSPYEAPLAAELTIDTSKGDLATQVRALIDYLTAINVINADKAKALA.

31–38 is a binding site for ATP; it reads GLSGAGKS. Serine 105 (phosphoserine intermediate) is an active-site residue.

It belongs to the APS kinase family.

The enzyme catalyses adenosine 5'-phosphosulfate + ATP = 3'-phosphoadenylyl sulfate + ADP + H(+). Its pathway is sulfur metabolism; hydrogen sulfide biosynthesis; sulfite from sulfate: step 2/3. Its function is as follows. Catalyzes the synthesis of activated sulfate. The protein is Adenylyl-sulfate kinase of Shewanella baltica (strain OS223).